We begin with the raw amino-acid sequence, 38 residues long: uncharacterized protein (38 aa).

This sequence belongs to the asfivirus C84L family.

This is an uncharacterized protein from Ornithodoros (relapsing fever ticks).